We begin with the raw amino-acid sequence, 355 residues long: MESIFHEKQEGSLCAQHCLNNLLQGEYFSPVELSSIAHQLDEEERLRMAEGGVTSEDYRTFLQQPSGNMDDSGFFSIQVISNALKVWGLELILFNSPEYQRLRIDPINERSFICNYKEHWFTVRKLGKQWFNLNSLLTGPELISDTYLALFLAQLQQEGYSIFVVKGDLPDCEADQLLQMIKVQQMHRPKLIGEELAHLKEQSALKADLERVLEAADGSGIFDEDEDDLQRALAISRQEIDMEDEEADLRRAIQLSMQGSSRSMCENSPQTSSPDLSSEELRRRREAYFEKQQQQQQEVDRPGPLSYPRERPTTSSGGRRSDQGGDAVSEEDMLRAAVTMSLETAKDNLKAERKK.

Methionine 1 is covalently cross-linked (Peptide (Met-Gly) (interchain with G-Cter in ubiquitin)). The Josephin domain maps to 1 to 180 (MESIFHEKQE…DCEADQLLQM (180 aa)). The Nucleophile role is filled by cysteine 14. The active-site Proton acceptor is the histidine 119. Asparagine 134 is an active-site residue. Lysine 200 is covalently cross-linked (Glycyl lysine isopeptide (Lys-Gly) (interchain with G-Cter in ubiquitin)). Serine 219 carries the phosphoserine modification. 2 consecutive UIM domains span residues 224-243 (EDED…IDME) and 244-263 (DEEA…SSRS). Polar residues predominate over residues 257 to 275 (MQGSSRSMCENSPQTSSPD). The segment at 257–355 (MQGSSRSMCE…KDNLKAERKK (99 aa)) is disordered. 3 positions are modified to phosphoserine: serine 268, serine 272, and serine 273. Residues 279 to 289 (EELRRRREAYF) show a composition bias toward basic and acidic residues. Serine 321 is modified (phosphoserine). The region spanning 329-348 (SEEDMLRAAVTMSLETAKDN) is the UIM 3 domain. Positions 344–355 (TAKDNLKAERKK) are enriched in basic and acidic residues.

As to quaternary structure, interacts with STUB1/CHIP (when monoubiquitinated). Interacts with DNA repair proteins RAD23A and RAD23B. Interacts with BECN1 (via its poly-Gln domain). Interacts with PRKN, UBR2, VCP and tubulin. In terms of processing, monoubiquitinated by UBE2W, possibly leading to activate the deubiquitinating enzyme activity.

It localises to the nucleus matrix. The protein resides in the nucleus. The protein localises to the lysosome membrane. The enzyme catalyses Thiol-dependent hydrolysis of ester, thioester, amide, peptide and isopeptide bonds formed by the C-terminal Gly of ubiquitin (a 76-residue protein attached to proteins as an intracellular targeting signal).. In terms of biological role, deubiquitinating enzyme involved in protein homeostasis maintenance, transcription, cytoskeleton regulation, myogenesis and degradation of misfolded chaperone substrates. Binds long polyubiquitin chains and trims them, while it has weak or no activity against chains of 4 or less ubiquitins. Involved in degradation of misfolded chaperone substrates via its interaction with STUB1/CHIP: recruited to monoubiquitinated STUB1/CHIP, and restricts the length of ubiquitin chain attached to STUB1/CHIP substrates and preventing further chain extension. Interacts with key regulators of transcription and represses transcription: acts as a histone-binding protein that regulates transcription. Acts as a negative regulator of mTORC1 signaling in response to amino acid deprivation by mediating deubiquitination of RHEB, thereby promoting RHEB inactivation by the TSC-TBC complex. Regulates autophagy via the deubiquitination of 'Lys-402' of BECN1 leading to the stabilization of BECN1. This Mus musculus (Mouse) protein is Ataxin-3 (Atxn3).